The primary structure comprises 278 residues: Thiazole synthase (278 aa).

Residue Lys109 is the Schiff-base intermediate with DXP of the active site. 1-deoxy-D-xylulose 5-phosphate contacts are provided by residues Gly170, 197–198 (AG), and 219–220 (NT).

Belongs to the ThiG family. In terms of assembly, homotetramer. Forms heterodimers with either ThiH or ThiS.

The protein resides in the cytoplasm. It catalyses the reaction [ThiS sulfur-carrier protein]-C-terminal-Gly-aminoethanethioate + 2-iminoacetate + 1-deoxy-D-xylulose 5-phosphate = [ThiS sulfur-carrier protein]-C-terminal Gly-Gly + 2-[(2R,5Z)-2-carboxy-4-methylthiazol-5(2H)-ylidene]ethyl phosphate + 2 H2O + H(+). It functions in the pathway cofactor biosynthesis; thiamine diphosphate biosynthesis. Its function is as follows. Catalyzes the rearrangement of 1-deoxy-D-xylulose 5-phosphate (DXP) to produce the thiazole phosphate moiety of thiamine. Sulfur is provided by the thiocarboxylate moiety of the carrier protein ThiS. In vitro, sulfur can be provided by H(2)S. The protein is Thiazole synthase of Cupriavidus taiwanensis (strain DSM 17343 / BCRC 17206 / CCUG 44338 / CIP 107171 / LMG 19424 / R1) (Ralstonia taiwanensis (strain LMG 19424)).